Reading from the N-terminus, the 211-residue chain is Probable septum site-determining protein MinC (211 aa).

Belongs to the MinC family. Interacts with MinD and FtsZ.

Its function is as follows. Cell division inhibitor that blocks the formation of polar Z ring septums. Rapidly oscillates between the poles of the cell to destabilize FtsZ filaments that have formed before they mature into polar Z rings. Prevents FtsZ polymerization. This chain is Probable septum site-determining protein MinC, found in Clostridium acetobutylicum (strain ATCC 824 / DSM 792 / JCM 1419 / IAM 19013 / LMG 5710 / NBRC 13948 / NRRL B-527 / VKM B-1787 / 2291 / W).